A 602-amino-acid chain; its full sequence is Aspartate--tRNA(Asp/Asn) ligase (602 aa).

Position 175 (Glu175) interacts with L-aspartate. Positions 199–202 (QIFK) are aspartate. Arg221 lines the L-aspartate pocket. ATP is bound by residues 221-223 (RDE) and Gln230. His458 contributes to the L-aspartate binding site. Glu492 contacts ATP. Arg499 serves as a coordination point for L-aspartate. 544–547 (GLDR) serves as a coordination point for ATP.

It belongs to the class-II aminoacyl-tRNA synthetase family. Type 1 subfamily. In terms of assembly, homodimer.

The protein localises to the cytoplasm. It catalyses the reaction tRNA(Asx) + L-aspartate + ATP = L-aspartyl-tRNA(Asx) + AMP + diphosphate. In terms of biological role, aspartyl-tRNA synthetase with relaxed tRNA specificity since it is able to aspartylate not only its cognate tRNA(Asp) but also tRNA(Asn). Reaction proceeds in two steps: L-aspartate is first activated by ATP to form Asp-AMP and then transferred to the acceptor end of tRNA(Asp/Asn). The protein is Aspartate--tRNA(Asp/Asn) ligase of Cupriavidus metallidurans (strain ATCC 43123 / DSM 2839 / NBRC 102507 / CH34) (Ralstonia metallidurans).